Consider the following 1255-residue polypeptide: Bifunctional autolysin (1255 aa).

Positions 1–36 (MLGVINRMAKKFNYKLPSMVALTLVGSAVTAHQVQA) are cleaved as a signal peptide. Disordered stretches follow at residues 110-141 (GDTR…NTNV) and 193-218 (VTTF…KYKP). The interval 199–775 (SAQPRSVAAT…VAQPKTAVKA (577 aa)) is N-acetylmuramoyl-L-alanine amidase. GW domains are found at residues 442–516 (TVAA…YNTA), 518–592 (SPVN…DTAK), 611–685 (TVSS…YNNA), 687–761 (SPVN…VPAA), 783–858 (TTQT…VQNL), 860–935 (KEVK…APTA), and 942–1016 (AAKD…KELI). The segment at 776-1255 (YTVTKPQTTQ…GKYFDIPQYK (480 aa)) is endo-beta-N-acetylglucosaminidase.

It in the N-terminal section; belongs to the N-acetylmuramoyl-L-alanine amidase 2 family. In the C-terminal section; belongs to the glycosyl hydrolase 73 family. In terms of assembly, oligomer; forms a ring structure at the cell surface which is important for efficient partitioning of daughter cells after cell division. In terms of processing, undergoes proteolytic processing to generate the two extracellular lytic enzymes, probably at the septal region on the cell surface.

It is found in the secreted. It catalyses the reaction Hydrolyzes the link between N-acetylmuramoyl residues and L-amino acid residues in certain cell-wall glycopeptides.. The catalysed reaction is an N(4)-(oligosaccharide-(1-&gt;3)-[oligosaccharide-(1-&gt;6)]-beta-D-Man-(1-&gt;4)-beta-D-GlcNAc-(1-&gt;4)-alpha-D-GlcNAc)-L-asparaginyl-[protein] + H2O = an oligosaccharide-(1-&gt;3)-[oligosaccharide-(1-&gt;6)]-beta-D-Man-(1-&gt;4)-D-GlcNAc + N(4)-(N-acetyl-beta-D-glucosaminyl)-L-asparaginyl-[protein]. In terms of biological role, endohydrolysis of the di-N-acetylchitobiosyl unit in high-mannose glycopeptides and glycoproteins containing the -[(Man)5(GlcNAc)2]-Asn structure. One N-acetyl-D-glucosamine residue remains attached to the protein; the rest of the oligosaccharide is released intact. Cleaves the peptidoglycan connecting the daughter cells at the end of the cell division cycle, resulting in the separation of the two newly divided cells. Acts as an autolysin in penicillin-induced lysis. The polypeptide is Bifunctional autolysin (atl) (Staphylococcus aureus (strain Mu3 / ATCC 700698)).